Reading from the N-terminus, the 206-residue chain is Probable glutathione S-transferase 9 (206 aa).

In terms of domain architecture, GST N-terminal spans 2–79; that stretch reads VSYKLIYFQS…YLSKQFGISG (78 aa). Glutathione-binding positions include tyrosine 8, tryptophan 39, lysine 43, 49 to 51, and 63 to 64; these read GQV and QS. A GST C-terminal domain is found at 81–206; that stretch reads SSWEEAQVDA…WIEKRPVTSR (126 aa).

The protein belongs to the GST superfamily. Sigma family.

The enzyme catalyses RX + glutathione = an S-substituted glutathione + a halide anion + H(+). In terms of biological role, conjugation of reduced glutathione to a wide number of exogenous and endogenous hydrophobic electrophiles. The protein is Probable glutathione S-transferase 9 (gst-9) of Caenorhabditis elegans.